A 727-amino-acid polypeptide reads, in one-letter code: NADH-ubiquinone oxidoreductase 75 kDa subunit, mitochondrial (727 aa).

The transit peptide at 1-23 (MLRIPVRKALVGLSKSPKGCVRT) directs the protein to the mitochondrion. The region spanning 30 to 108 (NLIEVFVDGQ…GWNILTNSEK (79 aa)) is the 2Fe-2S ferredoxin-type domain. [2Fe-2S] cluster contacts are provided by C64, C75, and C78. The residue at position 84 (K84) is an N6-acetyllysine. C92 provides a ligand contact to [2Fe-2S] cluster. The 4Fe-4S His(Cys)3-ligated-type domain occupies 108-147 (KSKKAREGVMEFLLANHPLDCPICDQGGECDLQDQSMMFG). 8 residues coordinate [4Fe-4S] cluster: H124, C128, C131, C137, C176, C179, C182, and C226. The region spanning 245–301 (TRKTESIDVMDAVGSNIVVSTRTGEVMRILPRMHEDINEEWISDKTRFAYDGLKRQR) is the 4Fe-4S Mo/W bis-MGD-type domain. Residues K467, K499, and K709 each carry the N6-acetyllysine modification.

This sequence belongs to the complex I 75 kDa subunit family. Core subunit of respiratory chain NADH dehydrogenase (Complex I) which is composed of 45 different subunits. This is the largest subunit of complex I and it is a component of the iron-sulfur (IP) fragment of the enzyme. Complex I associates with ubiquinol-cytochrome reductase complex (Complex III) to form supercomplexes. Interacts with MDM2 and AKAP1. [2Fe-2S] cluster serves as cofactor. [4Fe-4S] cluster is required as a cofactor.

The protein resides in the mitochondrion inner membrane. The catalysed reaction is a ubiquinone + NADH + 5 H(+)(in) = a ubiquinol + NAD(+) + 4 H(+)(out). Functionally, core subunit of the mitochondrial membrane respiratory chain NADH dehydrogenase (Complex I) which catalyzes electron transfer from NADH through the respiratory chain, using ubiquinone as an electron acceptor. Essential for catalysing the entry and efficient transfer of electrons within complex I. Plays a key role in the assembly and stability of complex I and participates in the association of complex I with ubiquinol-cytochrome reductase complex (Complex III) to form supercomplexes. The protein is NADH-ubiquinone oxidoreductase 75 kDa subunit, mitochondrial (NDUFS1) of Macaca fascicularis (Crab-eating macaque).